The primary structure comprises 145 residues: Group IID secretory phospholipase A2 (145 aa).

The N-terminal stretch at 1–20 (MELALLCGLVVMAGVIPIQG) is a signal peptide. Cystine bridges form between Cys46/Cys138, Cys48/Cys64, Cys63/Cys118, Cys69/Cys145, Cys70/Cys111, Cys79/Cys104, and Cys97/Cys109. Residues His47, Gly49, and Gly51 each coordinate Ca(2+). His67 is an active-site residue. Asp68 contributes to the Ca(2+) binding site. A glycan (N-linked (GlcNAc...) asparagine) is linked at Asn89. Asp112 is an active-site residue.

Belongs to the phospholipase A2 family. Ca(2+) is required as a cofactor. In terms of tissue distribution, highly expressed in pancreas and spleen and less abundantly in colon, thymus, placenta, small intestine, and prostate.

Its subcellular location is the secreted. It carries out the reaction a 1,2-diacyl-sn-glycero-3-phosphoethanolamine + H2O = a 1-acyl-sn-glycero-3-phosphoethanolamine + a fatty acid + H(+). The catalysed reaction is 1-hexadecanoyl-2-(9Z-octadecenoyl)-sn-glycero-3-phosphoethanolamine + H2O = 1-hexadecanoyl-sn-glycero-3-phosphoethanolamine + (9Z)-octadecenoate + H(+). The enzyme catalyses 1-hexadecanoyl-2-(9Z,12Z-octadecadienoyl)-sn-glycero-3-phosphoethanolamine + H2O = 1-hexadecanoyl-sn-glycero-3-phosphoethanolamine + (9Z,12Z)-octadecadienoate + H(+). It catalyses the reaction 1,2-dihexadecanoyl-sn-glycero-3-phospho-(1'-sn-glycerol) + H2O = 1-hexadecanoyl-sn-glycero-3-phospho-(1'-sn-glycerol) + hexadecanoate + H(+). It carries out the reaction 1-hexadecanoyl-2-(9Z-octadecenoyl)-sn-glycero-3-phospho-(1'-sn-glycerol) + H2O = 1-hexadecanoyl-sn-glycero-3-phospho-(1'-sn-glycerol) + (9Z)-octadecenoate + H(+). The catalysed reaction is a 1,2-diacyl-sn-glycero-3-phosphocholine + H2O = a 1-acyl-sn-glycero-3-phosphocholine + a fatty acid + H(+). The enzyme catalyses 1,2-dihexadecanoyl-sn-glycero-3-phosphocholine + H2O = 1-hexadecanoyl-sn-glycero-3-phosphocholine + hexadecanoate + H(+). It catalyses the reaction 1-hexadecanoyl-2-(9Z-octadecenoyl)-sn-glycero-3-phosphocholine + H2O = 1-hexadecanoyl-sn-glycero-3-phosphocholine + (9Z)-octadecenoate + H(+). It carries out the reaction 1-hexadecanoyl-2-(9Z,12Z-octadecadienoyl)-sn-glycero-3-phosphocholine + H2O = (9Z,12Z)-octadecadienoate + 1-hexadecanoyl-sn-glycero-3-phosphocholine + H(+). The catalysed reaction is 1-hexadecanoyl-2-(4Z,7Z,10Z,13Z,16Z,19Z-docosahexaenoyl)-sn-glycero-3-phosphocholine + H2O = (4Z,7Z,10Z,13Z,16Z,19Z)-docosahexaenoate + 1-hexadecanoyl-sn-glycero-3-phosphocholine + H(+). Functionally, secretory calcium-dependent phospholipase A2 that primarily targets extracellular lipids, exerting anti-inflammatory and immunosuppressive functions. Hydrolyzes the ester bond of the fatty acyl group attached at sn-2 position of phospholipids (phospholipase A2 activity) with preference for phosphatidylethanolamines and phosphatidylglycerols over phosphatidylcholines. In draining lymph nodes, selectively hydrolyzes diacyl and alkenyl forms of phosphatidylethanolamines, releasing omega-3 polyunsaturated fatty acids (PUFAs) such as eicosapentaenoate and docosahexaenoate that are precursors of the anti-inflammatory lipid mediators, resolvins. During the resolution phase of acute inflammation drives docosahexaenoate-derived resolvin D1 synthesis, which suppresses dendritic cell activation and T-helper 1 immune response. May act in an autocrine and paracrine manner. Via a mechanism independent of its catalytic activity, promotes differentiation of regulatory T cells (Tregs) and participates in the maintenance of immune tolerance. May contribute to lipid remodeling of cellular membranes and generation of lipid mediators involved in pathogen clearance. Displays bactericidal activity against Gram-positive bacteria by directly hydrolyzing phospholipids of the bacterial membrane. This is Group IID secretory phospholipase A2 (PLA2G2D) from Homo sapiens (Human).